Consider the following 139-residue polypeptide: Putative nickel-responsive regulator (139 aa).

Residues His77, His88, His90, and Cys96 each coordinate Ni(2+).

This sequence belongs to the transcriptional regulatory CopG/NikR family. Ni(2+) is required as a cofactor.

Functionally, transcriptional regulator. The chain is Putative nickel-responsive regulator from Haloarcula marismortui (strain ATCC 43049 / DSM 3752 / JCM 8966 / VKM B-1809) (Halobacterium marismortui).